A 353-amino-acid polypeptide reads, in one-letter code: Protein-glutamate methylesterase/protein-glutamine glutaminase 4 (353 aa).

Residues Arg-7–Arg-124 enclose the Response regulatory domain. Residue Asp-58 is modified to 4-aspartylphosphate. Residues Pro-158–Ser-350 form the CheB-type methylesterase domain. Catalysis depends on residues Ser-172, His-199, and Asp-292.

This sequence belongs to the CheB family. Phosphorylated by CheA. Phosphorylation of the N-terminal regulatory domain activates the methylesterase activity.

The protein resides in the cytoplasm. It carries out the reaction [protein]-L-glutamate 5-O-methyl ester + H2O = L-glutamyl-[protein] + methanol + H(+). The catalysed reaction is L-glutaminyl-[protein] + H2O = L-glutamyl-[protein] + NH4(+). Its function is as follows. Involved in chemotaxis. Part of a chemotaxis signal transduction system that modulates chemotaxis in response to various stimuli. Catalyzes the demethylation of specific methylglutamate residues introduced into the chemoreceptors (methyl-accepting chemotaxis proteins or MCP) by CheR. Also mediates the irreversible deamidation of specific glutamine residues to glutamic acid. The polypeptide is Protein-glutamate methylesterase/protein-glutamine glutaminase 4 (Myxococcus xanthus (strain DK1622)).